Here is a 686-residue protein sequence, read N- to C-terminus: Putative pentatricopeptide repeat-containing protein At3g49142 (686 aa).

12 PPR repeats span residues 73–103 (NSSL…IPER), 104–138 (NVII…NVRP), 139–173 (DHYT…GLSS), 174–204 (TLFV…MSRR), 205–239 (DVVS…KISH), 240–272 (DAGT…MGKK), 273–307 (SLVS…GFEP), 308–342 (DAVS…KLIP), 343–373 (NLLL…MKSR), 374–408 (DVVS…GLVP), 409–439 (DSIA…MTDH), and 445–475 (RLEH…MSME). A type E motif region spans residues 480–555 (VWGALLGACR…NPGASNVEVN (76 aa)). Residues 556-586 (RIIHTFLVGDRSHPQSDEIYRELDVLVKKMK) are type E(+) motif. The type DYW motif stretch occupies residues 587–686 (ELGYVPDSES…FGVCSCGDYW (100 aa)).

This sequence belongs to the PPR family. PCMP-H subfamily.

The sequence is that of Putative pentatricopeptide repeat-containing protein At3g49142 (PCMP-H77) from Arabidopsis thaliana (Mouse-ear cress).